Consider the following 345-residue polypeptide: S-adenosylmethionine:tRNA ribosyltransferase-isomerase (345 aa).

It belongs to the QueA family. In terms of assembly, monomer.

Its subcellular location is the cytoplasm. It carries out the reaction 7-aminomethyl-7-carbaguanosine(34) in tRNA + S-adenosyl-L-methionine = epoxyqueuosine(34) in tRNA + adenine + L-methionine + 2 H(+). Its pathway is tRNA modification; tRNA-queuosine biosynthesis. In terms of biological role, transfers and isomerizes the ribose moiety from AdoMet to the 7-aminomethyl group of 7-deazaguanine (preQ1-tRNA) to give epoxyqueuosine (oQ-tRNA). The polypeptide is S-adenosylmethionine:tRNA ribosyltransferase-isomerase (Helicobacter pylori (strain HPAG1)).